Consider the following 113-residue polypeptide: Large ribosomal subunit protein uL24 (113 aa).

Belongs to the universal ribosomal protein uL24 family. As to quaternary structure, part of the 50S ribosomal subunit.

Functionally, one of two assembly initiator proteins, it binds directly to the 5'-end of the 23S rRNA, where it nucleates assembly of the 50S subunit. One of the proteins that surrounds the polypeptide exit tunnel on the outside of the subunit. This is Large ribosomal subunit protein uL24 from Chlamydia abortus (strain DSM 27085 / S26/3) (Chlamydophila abortus).